Reading from the N-terminus, the 217-residue chain is 3,4-dihydroxy-2-butanone 4-phosphate synthase (217 aa).

D-ribulose 5-phosphate-binding positions include 37-38 (RE), D42, 150-154 (RGGHT), and E174. E38 contributes to the Mg(2+) binding site. A Mg(2+)-binding site is contributed by H153.

It belongs to the DHBP synthase family. As to quaternary structure, homodimer. Mg(2+) is required as a cofactor. Requires Mn(2+) as cofactor.

It catalyses the reaction D-ribulose 5-phosphate = (2S)-2-hydroxy-3-oxobutyl phosphate + formate + H(+). Its pathway is cofactor biosynthesis; riboflavin biosynthesis; 2-hydroxy-3-oxobutyl phosphate from D-ribulose 5-phosphate: step 1/1. Functionally, catalyzes the conversion of D-ribulose 5-phosphate to formate and 3,4-dihydroxy-2-butanone 4-phosphate. The polypeptide is 3,4-dihydroxy-2-butanone 4-phosphate synthase (Escherichia coli O17:K52:H18 (strain UMN026 / ExPEC)).